Reading from the N-terminus, the 253-residue chain is Distal tail protein (253 aa).

As to quaternary structure, homohexamer.

The protein localises to the virion. In terms of biological role, forms a 40 Angstroms wide channel at the distal tip of the tail. Remains associated to the tail after DNA ejection. The polypeptide is Distal tail protein (Bacillus phage SPP1 (Bacteriophage SPP1)).